Here is a 244-residue protein sequence, read N- to C-terminus: Biosynthetic peptidoglycan transglycosylase (244 aa).

A helical transmembrane segment spans residues 25-45; sequence LLLLLAIALLYQSWFLLHIIY.

Belongs to the glycosyltransferase 51 family.

Its subcellular location is the cell inner membrane. The enzyme catalyses [GlcNAc-(1-&gt;4)-Mur2Ac(oyl-L-Ala-gamma-D-Glu-L-Lys-D-Ala-D-Ala)](n)-di-trans,octa-cis-undecaprenyl diphosphate + beta-D-GlcNAc-(1-&gt;4)-Mur2Ac(oyl-L-Ala-gamma-D-Glu-L-Lys-D-Ala-D-Ala)-di-trans,octa-cis-undecaprenyl diphosphate = [GlcNAc-(1-&gt;4)-Mur2Ac(oyl-L-Ala-gamma-D-Glu-L-Lys-D-Ala-D-Ala)](n+1)-di-trans,octa-cis-undecaprenyl diphosphate + di-trans,octa-cis-undecaprenyl diphosphate + H(+). The protein operates within cell wall biogenesis; peptidoglycan biosynthesis. Peptidoglycan polymerase that catalyzes glycan chain elongation from lipid-linked precursors. The polypeptide is Biosynthetic peptidoglycan transglycosylase (Nitrosomonas eutropha (strain DSM 101675 / C91 / Nm57)).